A 116-amino-acid chain; its full sequence is Protein Wnt-5a (116 aa).

A lipid anchor (O-palmitoleoyl serine; by PORCN) is attached at Ser1. Residues Asn69 and Asn83 are each glycosylated (N-linked (GlcNAc...) asparagine). The cysteines at positions 82 and 97 are disulfide-linked.

This sequence belongs to the Wnt family. In terms of processing, palmitoleoylation is required for efficient binding to frizzled receptors. Depalmitoleoylation leads to Wnt signaling pathway inhibition.

Its subcellular location is the secreted. The protein localises to the extracellular space. The protein resides in the extracellular matrix. Its function is as follows. Ligand for members of the frizzled family of seven transmembrane receptors. Can activate or inhibit canonical Wnt signaling, depending on receptor context. Required during embryogenesis for extension of the primary anterior-posterior axis. The protein is Protein Wnt-5a (WNT5A) of Anser caerulescens (Snow goose).